The following is a 108-amino-acid chain: Large ribosomal subunit protein bL21 (108 aa).

The protein belongs to the bacterial ribosomal protein bL21 family. As to quaternary structure, part of the 50S ribosomal subunit. Contacts protein L20.

Its function is as follows. This protein binds to 23S rRNA in the presence of protein L20. The sequence is that of Large ribosomal subunit protein bL21 from Acidobacterium capsulatum (strain ATCC 51196 / DSM 11244 / BCRC 80197 / JCM 7670 / NBRC 15755 / NCIMB 13165 / 161).